The primary structure comprises 372 residues: DNA polymerase delta subunit 3 (372 aa).

Disordered regions lie at residues 156-264 (KKAP…NLDS) and 352-372 (KKNT…FGKK). A compositionally biased stretch (polar residues) spans 160-173 (STHSPQLSVPSKTS). Ser163 carries the phosphoserine modification. Composition is skewed to basic and acidic residues over residues 174-190 (TIDK…KGKD) and 209-239 (APLE…DDLK). The span at 355-365 (TAQSKPQQKSI) shows a compositional bias: polar residues.

In terms of assembly, heterotetramer that consist of the pol3, cdc1, cdc27 and cdm1 subunits. Cdc27 interacts with cdc1 and is required for dimerization of the tetramer.

The protein localises to the nucleus. The sequence is that of DNA polymerase delta subunit 3 (cdc27) from Schizosaccharomyces pombe (strain 972 / ATCC 24843) (Fission yeast).